Consider the following 208-residue polypeptide: MIAKGSEPWLFAAASATALFAILSWATDSLPFLNHAAHMGMALTFFMVIFFRDPERKVEISDAYMISPADGTVIDIRDRKICIFMFLQNVHVNRAPISGKIREITYKKGGYLPAFCKDSERNERNEFIIHSKYGDVEVTQIAGTIARRIVTYSNVNDSVEQGQRIGMIRFGSRVDVTIPHDFDITVCKGERVLAGKTVIATIKNDRDF.

Ser-172 serves as the catalytic Schiff-base intermediate with substrate; via pyruvic acid. The residue at position 172 (Ser-172) is a Pyruvic acid (Ser); by autocatalysis.

This sequence belongs to the phosphatidylserine decarboxylase family. PSD-A subfamily. Heterodimer of a large membrane-associated beta subunit and a small pyruvoyl-containing alpha subunit. Requires pyruvate as cofactor. Is synthesized initially as an inactive proenzyme. Formation of the active enzyme involves a self-maturation process in which the active site pyruvoyl group is generated from an internal serine residue via an autocatalytic post-translational modification. Two non-identical subunits are generated from the proenzyme in this reaction, and the pyruvate is formed at the N-terminus of the alpha chain, which is derived from the carboxyl end of the proenzyme. The post-translation cleavage follows an unusual pathway, termed non-hydrolytic serinolysis, in which the side chain hydroxyl group of the serine supplies its oxygen atom to form the C-terminus of the beta chain, while the remainder of the serine residue undergoes an oxidative deamination to produce ammonia and the pyruvoyl prosthetic group on the alpha chain.

Its subcellular location is the cell membrane. The enzyme catalyses archaetidylserine + H(+) = archaetidylethanolamine + CO2. Functionally, catalyzes the formation of archaetidylethanolamine (PtdEtn) from archaetidylserine (PtdSer). The sequence is that of Putative archaetidylserine decarboxylase proenzyme from Methanosarcina acetivorans (strain ATCC 35395 / DSM 2834 / JCM 12185 / C2A).